The sequence spans 297 residues: Large ribosomal subunit protein uL18 (297 aa).

At Gly2 the chain carries N-acetylglycine. An N6-acetyllysine mark is found at Lys5 and Lys48. A Phosphoserine modification is found at Ser185. N6-acetyllysine; alternate is present on Lys220. Residue Lys220 forms a Glycyl lysine isopeptide (Lys-Gly) (interchain with G-Cter in SUMO1); alternate linkage. A Glycyl lysine isopeptide (Lys-Gly) (interchain with G-Cter in SUMO2); alternate cross-link involves residue Lys220. Thr232 bears the Phosphothreonine mark. The segment at 253-297 (YEKKPKREVKKKRWNRPKMSLAQKKDRVAQKKASFLRAQERAAES) is disordered. Positions 258–268 (KREVKKKRWNR) are enriched in basic residues. A Phosphoserine modification is found at Ser272.

The protein belongs to the universal ribosomal protein uL18 family. As to quaternary structure, component of the large ribosomal subunit (LSU). Part of the 5S RNP complex, which is a LSU subcomplex composed of the 5S RNA, RPL5 and RPL11. Component of a hexameric 5S RNP precursor complex, composed of 5S RNA, RRS1, RPF2/BXDC1, RPL5, RPL11 and HEATR3; this complex acts as a precursor for ribosome assembly. Interacts with NVL in an ATP-dependent manner. Interacts with RRP1B. Interacts with IPO5, IPO7 and KPNB1; these interactions may be involved in RPL5 nuclear import for the assembly of ribosomal subunits.

It is found in the cytoplasm. Its subcellular location is the nucleus. The protein localises to the nucleolus. In terms of biological role, component of the ribosome, a large ribonucleoprotein complex responsible for the synthesis of proteins in the cell. The small ribosomal subunit (SSU) binds messenger RNAs (mRNAs) and translates the encoded message by selecting cognate aminoacyl-transfer RNA (tRNA) molecules. The large subunit (LSU) contains the ribosomal catalytic site termed the peptidyl transferase center (PTC), which catalyzes the formation of peptide bonds, thereby polymerizing the amino acids delivered by tRNAs into a polypeptide chain. The nascent polypeptides leave the ribosome through a tunnel in the LSU and interact with protein factors that function in enzymatic processing, targeting, and the membrane insertion of nascent chains at the exit of the ribosomal tunnel. As part of the 5S RNP/5S ribonucleoprotein particle it is an essential component of the LSU, required for its formation and the maturation of rRNAs. It also couples ribosome biogenesis to p53/TP53 activation. As part of the 5S RNP it accumulates in the nucleoplasm and inhibits MDM2, when ribosome biogenesis is perturbed, mediating the stabilization and the activation of TP53. This chain is Large ribosomal subunit protein uL18 (Rpl5), found in Mus musculus (Mouse).